Consider the following 138-residue polypeptide: Large ribosomal subunit protein uL16 (138 aa).

The segment covering 1–17 (MLIPRKVKHRKQHHPRQ) has biased composition (basic residues). Residues 1–24 (MLIPRKVKHRKQHHPRQRGIASGG) form a disordered region.

It belongs to the universal ribosomal protein uL16 family. As to quaternary structure, part of the 50S ribosomal subunit.

Functionally, binds 23S rRNA and is also seen to make contacts with the A and possibly P site tRNAs. In Mycolicibacterium gilvum (strain PYR-GCK) (Mycobacterium gilvum (strain PYR-GCK)), this protein is Large ribosomal subunit protein uL16.